Here is a 79-residue protein sequence, read N- to C-terminus: Crassicorin-I (79 aa).

The signal sequence occupies residues 1-19 (MKLFLVSIVLVGMLVLAAA). Residues 20–39 (RPERDIDSFDEQEEKGFVKR) constitute a propeptide that is removed on maturation. Disulfide bonds link Cys43–Cys76, Cys45–Cys69, and Cys59–Cys77.

This sequence belongs to the sea anemone type 3 (BDS) potassium channel toxin family. In terms of tissue distribution, highly expressed by the mesenteries. Moderately expressed by the pharynx. Weakly expressed by the gonad and pedal disk. No expression in tentacle.

The protein resides in the secreted. It localises to the nematocyst. Its function is as follows. Peptide with both antimicrobial and neurotoxin activities. Cationic AMP with antibacterial activity against both Gram-positive bacteria (B.subtilis, MIC=11.49 ug/mL) and Gram-negative bacteria (E.coli (MIC=12.21 ug/mL) and S.enterica (MIC=11.95 ug/mL)). Shows no significant antimicrobial activity against bacteria S.aureus and P.aeruginosa, as well as the fungus C.albicans. In vivo, induces reversible paralytic activity towards the shrimp P.paucidens. May act by impairing sodium or potassium channels in the prey. The protein is Crassicorin-I of Urticina crassicornis (Mottled anemone).